We begin with the raw amino-acid sequence, 349 residues long: Twinfilin-2-A (349 aa).

ADF-H domains are found at residues 4 to 139 (QTGI…KHVS) and 177 to 313 (GLSF…DEVH). Positions 321–349 (QAFAKPKGPAGKRGQKRLIKGPGENGEDS) are disordered.

Belongs to the actin-binding proteins ADF family. Twinfilin subfamily. In terms of assembly, interacts with G-actin; ADP-actin form and capping protein (CP).

The protein resides in the cytoplasm. It is found in the cytoskeleton. Its subcellular location is the perinuclear region. Actin-binding protein involved in motile and morphological processes. Inhibits actin polymerization, likely by sequestering G-actin. The sequence is that of Twinfilin-2-A (twf2-a) from Xenopus laevis (African clawed frog).